Here is a 335-residue protein sequence, read N- to C-terminus: DNA polymerase beta (335 aa).

Residue K41 forms a Glycyl lysine isopeptide (Lys-Gly) (interchain with G-Cter in ubiquitin) linkage. Position 60 (K60) interacts with K(+). K60 contributes to the Na(+) binding site. K61 is covalently cross-linked (Glycyl lysine isopeptide (Lys-Gly) (interchain with G-Cter in ubiquitin)). The K(+) site is built by L62 and V65. Residues L62 and V65 each contribute to the Na(+) site. Catalysis depends on K72, which acts as the Nucleophile; Schiff-base intermediate with DNA; for 5'-dRP lyase activity. K72 carries the N6-acetyllysine modification. Residue K81 forms a Glycyl lysine isopeptide (Lys-Gly) (interchain with G-Cter in ubiquitin) linkage. An Omega-N-methylarginine; by PRMT6 modification is found at R83. K(+) is bound by residues T101, V103, and I106. Residues T101, V103, and I106 each contribute to the Na(+) site. R149 is a dATP binding site. R149 provides a ligand contact to dCTP. R149 contributes to the dGTP binding site. R149 lines the dTTP pocket. R152 carries the omega-N-methylarginine; by PRMT6 modification. DATP-binding residues include S180, R183, G189, and D190. Residues S180, R183, G189, and D190 each coordinate dCTP. The dGTP site is built by S180, R183, G189, D190, and D192. DTTP contacts are provided by S180, R183, G189, and D190. The interval 183-192 (RGAESSGDMD) is DNA-binding. Mg(2+) contacts are provided by D190, D192, and D256.

This sequence belongs to the DNA polymerase type-X family. As to quaternary structure, monomer. Binds single-stranded DNA (ssDNA). Interacts with APEX1, LIG1, LIG3, FEN1, PCNA and XRCC1. Interacts with HUWE1/ARF-BP1, STUB1/CHIP and USP47. Interacts with FAM168A. Mg(2+) is required as a cofactor. Post-translationally, methylation by PRMT6 stimulates the polymerase activity by enhancing DNA binding and processivity. Ubiquitinated at Lys-41, Lys-61 and Lys-81: monoubiquitinated by HUWE1/ARF-BP1. Monoubiquitinated protein is then the target of STUB1/CHIP, which catalyzes polyubiquitination from monoubiquitin, leading to degradation by the proteasome. USP47 mediates the deubiquitination of monoubiquitinated protein, preventing polyubiquitination by STUB1/CHIP and its subsequent degradation.

The protein resides in the nucleus. It localises to the cytoplasm. It carries out the reaction DNA(n) + a 2'-deoxyribonucleoside 5'-triphosphate = DNA(n+1) + diphosphate. The enzyme catalyses a 5'-end 2'-deoxyribose-2'-deoxyribonucleotide-DNA = (2E,4S)-4-hydroxypenten-2-al-5-phosphate + a 5'-end 5'-phospho-2'-deoxyribonucleoside-DNA + H(+). It catalyses the reaction 2'-deoxyribonucleotide-(2'-deoxyribose 5'-phosphate)-2'-deoxyribonucleotide-DNA = a 3'-end 2'-deoxyribonucleotide-(2,3-dehydro-2,3-deoxyribose 5'-phosphate)-DNA + a 5'-end 5'-phospho-2'-deoxyribonucleoside-DNA + H(+). In terms of biological role, repair polymerase that plays a key role in base-excision repair. During this process, the damaged base is excised by specific DNA glycosylases, the DNA backbone is nicked at the abasic site by an apurinic/apyrimidic (AP) endonuclease, and POLB removes 5'-deoxyribose-phosphate from the preincised AP site acting as a 5'-deoxyribose-phosphate lyase (5'-dRP lyase); through its DNA polymerase activity, it adds one nucleotide to the 3' end of the arising single-nucleotide gap. Conducts 'gap-filling' DNA synthesis in a stepwise distributive fashion rather than in a processive fashion as for other DNA polymerases. It is also able to cleave sugar-phosphate bonds 3' to an intact AP site, acting as an AP lyase. This Homo sapiens (Human) protein is DNA polymerase beta (POLB).